An 89-amino-acid chain; its full sequence is RNA-binding protein Hfq (89 aa).

A Sm domain is found at 14–73 (DPYLNALRKEKINVAIYLVNGVKLQGRVDSFDQFVVLLRSNVTQMVYKHAISTIVPARDP).

It belongs to the Hfq family. In terms of assembly, homohexamer.

Its function is as follows. RNA chaperone that binds small regulatory RNA (sRNAs) and mRNAs to facilitate mRNA translational regulation in response to envelope stress, environmental stress and changes in metabolite concentrations. Also binds with high specificity to tRNAs. The sequence is that of RNA-binding protein Hfq from Hydrogenovibrio crunogenus (strain DSM 25203 / XCL-2) (Thiomicrospira crunogena).